A 243-amino-acid polypeptide reads, in one-letter code: Myrosinase MB2 (243 aa).

N-linked (GlcNAc...) asparagine glycosylation is present at Asn-30. Tyr-51 contributes to the substrate binding site. Glu-125 acts as the Nucleophile in catalysis. Residues Trp-173 and 180–181 each bind substrate; that span reads EF. Asn-216 carries N-linked (GlcNAc...) asparagine glycosylation.

It belongs to the glycosyl hydrolase 1 family. As to quaternary structure, homodimer. As to expression, in vacuoles called myrosin grains of a certain class of cells, myrosin cells, distributed in the cotyledons and the axis of the embryo as well as in different organs of the growing plant.

The protein resides in the vacuole. It carries out the reaction a thioglucoside + H2O = a sugar + a thiol.. Functionally, degradation of glucosinolates (glucose residue linked by a thioglucoside bound to an amino acid derivative) to glucose, sulfate and any of the products: thiocyanates, isothiocyanates, nitriles, epithionitriles or oxazolidine-2-thiones. The protein is Myrosinase MB2 of Sinapis alba (White mustard).